Consider the following 297-residue polypeptide: Ezy-1 protein (297 aa).

Disordered regions lie at residues 1–34 (MAAV…GDGG), 115–151 (FTGK…SSSS), and 255–297 (QPAG…SPNM). Acidic residues predominate over residues 123–135 (AEGDDGEDEEEGE). Residues 136–150 (AQGVGKDAVDSSSSS) are compositionally biased toward low complexity. Basic and acidic residues predominate over residues 259-269 (DGHEPEPKRPE).

The protein is Ezy-1 protein (Ezy-1) of Chlamydomonas reinhardtii (Chlamydomonas smithii).